We begin with the raw amino-acid sequence, 514 residues long: 2,3-bisphosphoglycerate-independent phosphoglycerate mutase (514 aa).

Mn(2+) contacts are provided by Asp14 and Ser64. Ser64 functions as the Phosphoserine intermediate in the catalytic mechanism. Residues His125, 155–156, Arg187, Arg193, 263–266, and Lys337 contribute to the substrate site; these read RD and RADR. Residues Asp404, His408, Asp445, His446, and His464 each coordinate Mn(2+).

It belongs to the BPG-independent phosphoglycerate mutase family. As to quaternary structure, monomer. Mn(2+) serves as cofactor.

The catalysed reaction is (2R)-2-phosphoglycerate = (2R)-3-phosphoglycerate. It participates in carbohydrate degradation; glycolysis; pyruvate from D-glyceraldehyde 3-phosphate: step 3/5. In terms of biological role, catalyzes the interconversion of 2-phosphoglycerate and 3-phosphoglycerate. The sequence is that of 2,3-bisphosphoglycerate-independent phosphoglycerate mutase from Pseudoalteromonas translucida (strain TAC 125).